The chain runs to 113 residues: uncharacterized protein (113 aa).

Residues 1–38 (MVKIERKATDSAYHEFTKILTSSAQLMAFLNQSDFVKA) form the signal peptide.

This is an uncharacterized protein from Haemophilus influenzae (strain ATCC 51907 / DSM 11121 / KW20 / Rd).